The primary structure comprises 427 residues: Serine hydroxymethyltransferase (427 aa).

(6S)-5,6,7,8-tetrahydrofolate contacts are provided by residues L122 and 126–128 (GHL). An N6-(pyridoxal phosphate)lysine modification is found at K231.

The protein belongs to the SHMT family. In terms of assembly, homodimer. Requires pyridoxal 5'-phosphate as cofactor.

Its subcellular location is the cytoplasm. It carries out the reaction (6R)-5,10-methylene-5,6,7,8-tetrahydrofolate + glycine + H2O = (6S)-5,6,7,8-tetrahydrofolate + L-serine. The protein operates within one-carbon metabolism; tetrahydrofolate interconversion. It functions in the pathway amino-acid biosynthesis; glycine biosynthesis; glycine from L-serine: step 1/1. Its function is as follows. Catalyzes the reversible interconversion of serine and glycine with tetrahydrofolate (THF) serving as the one-carbon carrier. This reaction serves as the major source of one-carbon groups required for the biosynthesis of purines, thymidylate, methionine, and other important biomolecules. Also exhibits THF-independent aldolase activity toward beta-hydroxyamino acids, producing glycine and aldehydes, via a retro-aldol mechanism. The chain is Serine hydroxymethyltransferase from Acidobacterium capsulatum (strain ATCC 51196 / DSM 11244 / BCRC 80197 / JCM 7670 / NBRC 15755 / NCIMB 13165 / 161).